The chain runs to 334 residues: Holliday junction branch migration complex subunit RuvB (334 aa).

The tract at residues 4–184 (ADRLIQPQIQ…FGIPLRLEFY (181 aa)) is large ATPase domain (RuvB-L). ATP contacts are provided by residues Arg-24, Gly-65, Lys-68, Thr-69, Thr-70, 131–133 (EDY), Arg-174, Tyr-184, and Arg-221. A Mg(2+)-binding site is contributed by Thr-69. The tract at residues 185 to 255 (NIKDLSTIVT…VAEHALDLLD (71 aa)) is small ATPAse domain (RuvB-S). The segment at 258–334 (SEGFDYMDRK…YQHFELIKPE (77 aa)) is head domain (RuvB-H). Residues Arg-294, Arg-313, and Arg-318 each coordinate DNA.

This sequence belongs to the RuvB family. As to quaternary structure, homohexamer. Forms an RuvA(8)-RuvB(12)-Holliday junction (HJ) complex. HJ DNA is sandwiched between 2 RuvA tetramers; dsDNA enters through RuvA and exits via RuvB. An RuvB hexamer assembles on each DNA strand where it exits the tetramer. Each RuvB hexamer is contacted by two RuvA subunits (via domain III) on 2 adjacent RuvB subunits; this complex drives branch migration. In the full resolvosome a probable DNA-RuvA(4)-RuvB(12)-RuvC(2) complex forms which resolves the HJ.

The protein resides in the cytoplasm. It catalyses the reaction ATP + H2O = ADP + phosphate + H(+). Its function is as follows. The RuvA-RuvB-RuvC complex processes Holliday junction (HJ) DNA during genetic recombination and DNA repair, while the RuvA-RuvB complex plays an important role in the rescue of blocked DNA replication forks via replication fork reversal (RFR). RuvA specifically binds to HJ cruciform DNA, conferring on it an open structure. The RuvB hexamer acts as an ATP-dependent pump, pulling dsDNA into and through the RuvAB complex. RuvB forms 2 homohexamers on either side of HJ DNA bound by 1 or 2 RuvA tetramers; 4 subunits per hexamer contact DNA at a time. Coordinated motions by a converter formed by DNA-disengaged RuvB subunits stimulates ATP hydrolysis and nucleotide exchange. Immobilization of the converter enables RuvB to convert the ATP-contained energy into a lever motion, pulling 2 nucleotides of DNA out of the RuvA tetramer per ATP hydrolyzed, thus driving DNA branch migration. The RuvB motors rotate together with the DNA substrate, which together with the progressing nucleotide cycle form the mechanistic basis for DNA recombination by continuous HJ branch migration. Branch migration allows RuvC to scan DNA until it finds its consensus sequence, where it cleaves and resolves cruciform DNA. In Shewanella baltica (strain OS195), this protein is Holliday junction branch migration complex subunit RuvB.